Consider the following 181-residue polypeptide: Translation initiation factor IF-3 (181 aa).

It belongs to the IF-3 family. Monomer.

The protein resides in the cytoplasm. In terms of biological role, IF-3 binds to the 30S ribosomal subunit and shifts the equilibrium between 70S ribosomes and their 50S and 30S subunits in favor of the free subunits, thus enhancing the availability of 30S subunits on which protein synthesis initiation begins. The sequence is that of Translation initiation factor IF-3 from Azotobacter vinelandii.